Here is a 1203-residue protein sequence, read N- to C-terminus: Cingulin (1203 aa).

The tract at residues 7 to 357 (MAEPRGPVDH…VMVSSGSTKA (351 aa)) is head. The interval 25–48 (EPVSGAEMGTLRRGGRRPAKDARA) is disordered. Residues 48–62 (ASTYGVAVRVQGIAG) carry the ZIM motif. The tract at residues 54 to 67 (AVRVQGIAGQPFVV) is interaction with TJP1/ZO1. The tract at residues 89 to 127 (GASGALSSDLELPENPYSQVKGFPAPSQSSTSDEEPGAY) is disordered. Residues Ser95, Ser96, Ser135, Ser137, Ser140, Ser155, Ser165, Ser214, Ser217, Ser258, Ser276, Ser338, and Ser351 each carry the phosphoserine modification. The tract at residues 186–266 (DSQLGGQARG…LSPLSGFSRS (81 aa)) is disordered. The segment covering 207–231 (EQRKRSKSLDSRLPRDTFEERERQS) has biased composition (basic and acidic residues). Polar residues predominate over residues 232–266 (TNHWTSSTKYDNHVGTSKQPAQSQNLSPLSGFSRS). A coiled-coil region spans residues 358-1160 (VAGQGELTRK…SLEKDSWRKA (803 aa)). At Lys579 the chain carries N6-acetyllysine. Phosphothreonine is present on Thr712. Disordered regions lie at residues 1034–1053 (LASSEGFQKPSASLSQLESQ) and 1154–1181 (KDSWRKASRSAAESALKNEGLSSDEEFD). Residues 1044 to 1053 (SASLSQLESQ) are compositionally biased toward low complexity. Residues 1161–1203 (SRSAAESALKNEGLSSDEEFDSVYDPSSIASLLTESNLQTSSC) are tail. A phosphoserine mark is found at Ser1175, Ser1176, and Ser1182.

This sequence belongs to the cingulin family. In terms of assembly, homodimer. Interacts with TJP1/ZO1. Interacts with SPEF1. As to expression, localized on the cytoplasmic face of tight junctions of polarized epithelia and some endothelia. Expressed in pancreas, kidney, liver and lung, but not in skeletal muscle, placenta, brain or heart.

It is found in the cell junction. Its subcellular location is the tight junction. Probably plays a role in the formation and regulation of the tight junction (TJ) paracellular permeability barrier. The protein is Cingulin of Homo sapiens (Human).